We begin with the raw amino-acid sequence, 1324 residues long: Ubiquitin carboxyl-terminal hydrolase 42 (1324 aa).

2 disordered regions span residues 1–38 (MTIVDKASESSDPSAYQNQPGSSEAVSPGDMDAGSASW) and 63–87 (YSSSSVPDKSKPSPQKDQALGDGIA). The span at 10–25 (SSDPSAYQNQPGSSEA) shows a compositional bias: polar residues. Residues 63–80 (YSSSSVPDKSKPSPQKDQ) are compositionally biased toward low complexity. Ser75 carries the post-translational modification Phosphoserine. The region spanning 111–412 (AGLQNLGNTC…QAYVLFYIRS (302 aa)) is the USP domain. Cys120 acts as the Nucleophile in catalysis. Catalysis depends on His371, which acts as the Proton acceptor. 6 disordered regions span residues 452 to 494 (IGPQ…NRAS), 536 to 707 (QSQP…MPAP), 722 to 1026 (LSNK…RHRS), 1085 to 1131 (RAGL…HPDR), 1149 to 1254 (DRFH…VKDS), and 1275 to 1294 (GGFPLSGGPPLEGVGPFREK). Residues 477–489 (PSSSMSSPNGNSS) are compositionally biased toward low complexity. Ser483 is subject to Phosphoserine. Residues 536–564 (QSQPNLHSNSLENPTKPVPSSTITNSAVQ) are compositionally biased toward polar residues. Residues 565 to 576 (STSNASTMSVSS) are compositionally biased toward low complexity. Residues 586–603 (ESCSQPVMNGKSKLNSSV) are compositionally biased toward polar residues. Phosphoserine occurs at positions 754 and 856. Composition is skewed to basic and acidic residues over residues 938–974 (AKEKIGSLRKVDRGHYRSRRERSSSGEPARESRSKTE), 984–1013 (CPRERDRQDRHAPEHHPGHGDRLSPGERRS), 1101–1113 (RGCEPARERERHR), 1149–1158 (DRFHEHENGK), and 1165–1191 (DSVENSDSHVEKKARRSEQKDPLEEPK). At Ser1181 the chain carries Phosphoserine. Basic residues predominate over residues 1192 to 1206 (AKKHKKSKKKKKSKD). Residues 1207-1218 (KHRDRDSRHQQD) are compositionally biased toward basic and acidic residues. A phosphoserine mark is found at Ser1219, Ser1222, and Ser1226. Positions 1231 to 1245 (HRHKKKKKKKKRHSR) are enriched in basic residues. Ser1247 carries the phosphoserine modification.

Belongs to the peptidase C19 family. Broadly expressed.

The enzyme catalyses Thiol-dependent hydrolysis of ester, thioester, amide, peptide and isopeptide bonds formed by the C-terminal Gly of ubiquitin (a 76-residue protein attached to proteins as an intracellular targeting signal).. In terms of biological role, deubiquitinating enzyme which may play an important role during spermatogenesis. The sequence is that of Ubiquitin carboxyl-terminal hydrolase 42 (USP42) from Homo sapiens (Human).